Reading from the N-terminus, the 815-residue chain is MVKFSREYEASIIPEWKAAFVDYKRLKKLIKRIKVTRRDDSFAAANAAAAADHLLPPPPAEKEAGGYGFSILDPVRAIAARFSAGQQPSASEDEECPDRGELVRSTDKHEREFMERADEELEKVNAFYTGQEAELLARGDALLEQLRILADVKRILADHAAARRARGLARSRSMPPPPPSSSPPSSVHGSSGRYLLSGLSSPQSMSDGSLELQQAQVSEGAAVADEVMAALERNGVSFVGLAGKKDGKTKDGSGKGRGGGGGGGGGVLQLPATVRIDIPATSPGRAALKVWEELVNVLRKDGADPAAAFVHRKKIQHAEKNIRDAFMALYRGLELLKKFSSLNVKAFTKILKKFVKVSEQQRATDLFSEKVKRSPFSSSDKVLQLADEVECIFMKHFTGNDRKVAMKYLKPQQPRNTHMITFLVGLFTGTFVSLFIIYAILAHVSGIFTSTGNSAYMEIVYHVFSMFALISLHIFLYGCNLFMWKNTRINHNFIFDFSSNTALTHRDAFLMSASIMCTVVAALVINLFLKNAGVAYANALPGALLLLSTGVLFCPFDIFYRSTRYCFMRVMRNIIFSPFYKVLMADFFMADQLTSQIPLLRHMEFTACYFMAGSFRTHPYETCTSGQQYKHLAYVISFLPYFWRALQCLRRYLEEGHDINQLANAGKYVSAMVAAAVRFKYAATPTPFWVWMVIISSSGATIYQLYWDFVKDWGFLNPKSKNRWLRNELILKNKSIYYVSMMLNLALRLAWTESVMKIHIGKVESRLLDFSLASLEIIRRGHWNFYRLENEHLNNVGKFRAVKTVPLPFRELETD.

The Cytoplasmic portion of the chain corresponds to 1-421 (MVKFSREYEA…QQPRNTHMIT (421 aa)). In terms of domain architecture, SPX spans 2–368 (VKFSREYEAS…EQQRATDLFS (367 aa)). Disordered stretches follow at residues 83-108 (SAGQ…STDK), 166-213 (RGLA…LELQ), and 242-266 (AGKK…GGGG). The segment covering 97–108 (PDRGELVRSTDK) has biased composition (basic and acidic residues). Over residues 183-201 (PPSSVHGSSGRYLLSGLSS) the composition is skewed to low complexity. A compositionally biased stretch (polar residues) spans 202-213 (PQSMSDGSLELQ). Basic and acidic residues predominate over residues 243–254 (GKKDGKTKDGSG). Residues 255–266 (KGRGGGGGGGGG) are compositionally biased toward gly residues. A helical membrane pass occupies residues 422–442 (FLVGLFTGTFVSLFIIYAILA). The Extracellular portion of the chain corresponds to 443 to 458 (HVSGIFTSTGNSAYME). Residues 459 to 479 (IVYHVFSMFALISLHIFLYGC) form a helical membrane-spanning segment. At 480–508 (NLFMWKNTRINHNFIFDFSSNTALTHRDA) the chain is on the cytoplasmic side. A helical transmembrane segment spans residues 509-529 (FLMSASIMCTVVAALVINLFL). At 530-538 (KNAGVAYAN) the chain is on the extracellular side. The chain crosses the membrane as a helical span at residues 539–559 (ALPGALLLLSTGVLFCPFDIF). Topologically, residues 560 to 686 (YRSTRYCFMR…VRFKYAATPT (127 aa)) are cytoplasmic. An EXS domain is found at 624–815 (TSGQQYKHLA…PLPFRELETD (192 aa)). Residues 687-707 (PFWVWMVIISSSGATIYQLYW) traverse the membrane as a helical segment. Topologically, residues 708–734 (DFVKDWGFLNPKSKNRWLRNELILKNK) are extracellular. Residues 735-751 (SIYYVSMMLNLALRLAW) traverse the membrane as a helical segment. The Cytoplasmic segment spans residues 752-815 (TESVMKIHIG…PLPFRELETD (64 aa)).

It belongs to the SYG1 (TC 2.A.94) family. Specifically expressed in roots.

It localises to the cell membrane. Its function is as follows. Involved in the transfer of inorganic phosphate (Pi) from roots to shoots. The polypeptide is Phosphate transporter PHO1-2 (PHO1-2) (Oryza sativa subsp. japonica (Rice)).